The sequence spans 697 residues: Putative ATP-dependent RNA helicase an3 (697 aa).

The interval glutamate 27–glutamine 189 is disordered. Basic and acidic residues-rich tracts occupy residues glycine 89–alanine 111, arginine 135–glycine 144, and arginine 151–aspartate 170. The Q motif motif lies at glutamate 221–lysine 249. ATP-binding positions include tyrosine 241–glutamine 248 and alanine 265–threonine 272. Residues isoleucine 252–leucine 444 form the Helicase ATP-binding domain. Residues aspartate 388–aspartate 391 carry the DEAD box motif. Positions asparagine 455–alanine 616 constitute a Helicase C-terminal domain. The disordered stretch occupies residues glutamine 619 to serine 666. The segment covering lysine 622 to serine 631 has biased composition (basic residues). The span at serine 645–serine 654 shows a compositional bias: low complexity. Residues serine 655–serine 666 are compositionally biased toward gly residues.

This sequence belongs to the DEAD box helicase family. DDX3/DED1 subfamily.

Its subcellular location is the cell membrane. The protein resides in the nucleus. It is found in the cytoplasm. It localises to the stress granule. The protein localises to the inflammasome. Its subcellular location is the cell projection. The protein resides in the lamellipodium. The enzyme catalyses ATP + H2O = ADP + phosphate + H(+). In terms of biological role, multifunctional ATP-dependent RNA helicase. The ATPase activity can be stimulated by various ribo-and deoxynucleic acids indicative for a relaxed substrate specificity. In vitro can unwind partially double-stranded DNA with a preference for 5'-single-stranded DNA overhangs. Involved in many cellular processes, which do not necessarily require its ATPase/helicase catalytic activities. Involved in the regulation of transcription and translation initiation. Involved in innate immunity. Involved in both stress and inflammatory responses. May negatively regulate extrinsic apoptotic signaling pathway via death domain receptors. May be involved in mitotic chromosome segregation. Required for canonical Wnt signaling involved in anteroposterior neural patterning. The protein is Putative ATP-dependent RNA helicase an3 (an3) of Xenopus laevis (African clawed frog).